Consider the following 447-residue polypeptide: Drebrin-like protein A (447 aa).

The ADF-H domain maps to 2–133 (SVNLSKNGAA…EPESIMEKVA (132 aa)). Disordered regions lie at residues 141–160 (NFHK…VGSV) and 184–368 (KDEE…TENQ). The stretch at 180–245 (AKAEKDEEER…EQEETEKQQT (66 aa)) forms a coiled coil. The span at 184–242 (KDEEERRMEENRRANSEKDRLERERKEREQREAETREQRFRERAKEIDAQRKEQEETEK) shows a compositional bias: basic and acidic residues. The span at 246-255 (VPASQRSVNP) shows a compositional bias: polar residues. Residues 319–328 (PESPVPPVSH) are compositionally biased toward pro residues. A compositionally biased stretch (acidic residues) spans 345–365 (QEEENIYQDATEDQNIYEDTT). An SH3 domain is found at 388 to 447 (EKGVCARALYDYQAADDTEISFDPDDLITQIQFIDEGWWRGFSPAGHFGMFPANYVELLE).

This sequence belongs to the ABP1 family.

The protein localises to the cytoplasm. Its subcellular location is the cytoskeleton. It localises to the cell projection. It is found in the lamellipodium. The protein resides in the ruffle. The protein localises to the cell cortex. Its subcellular location is the cytosol. It localises to the synapse. It is found in the perikaryon. The protein resides in the neuron projection. The protein localises to the cell membrane. Its subcellular location is the cytoplasmic vesicle. It localises to the clathrin-coated vesicle membrane. It is found in the golgi apparatus membrane. The protein resides in the podosome. The protein localises to the early endosome. Its subcellular location is the dendrite. It localises to the postsynaptic density. In terms of biological role, adapter protein that binds F-actin and dynamin, and thereby plays a role in receptor-mediated endocytosis. Plays a role in the reorganization of the actin cytoskeleton, formation of cell projections, such as neurites, in neuron morphogenesis and synapse formation. Does not bind G-actin and promote actin polymerization by itself, but excerts its functions by interaction with other proteins. Required for the formation of organized podosome rosettes. The sequence is that of Drebrin-like protein A (dbnl-a) from Xenopus laevis (African clawed frog).